Consider the following 589-residue polypeptide: L-fucose isomerase (589 aa).

Active-site proton acceptor residues include Glu-340 and Asp-364. Residues Glu-340, Asp-364, and His-527 each contribute to the Mn(2+) site.

This sequence belongs to the L-fucose isomerase family. Mn(2+) serves as cofactor.

It is found in the cytoplasm. It carries out the reaction L-fucose = L-fuculose. The protein operates within carbohydrate degradation; L-fucose degradation; L-lactaldehyde and glycerone phosphate from L-fucose: step 1/3. Its function is as follows. Converts the aldose L-fucose into the corresponding ketose L-fuculose. The chain is L-fucose isomerase from Haemophilus influenzae (strain PittEE).